Reading from the N-terminus, the 301-residue chain is Galectin-6 (301 aa).

2 consecutive Galectin domains span residues 19 to 149 and 173 to 301; these read YKRP…INFF and YVGA…YVHI.

The protein is Galectin-6 (Lgals6) of Mus musculus (Mouse).